A 209-amino-acid chain; its full sequence is Large ribosomal subunit protein uL3 (209 aa).

Belongs to the universal ribosomal protein uL3 family. In terms of assembly, part of the 50S ribosomal subunit. Forms a cluster with proteins L14 and L19.

Its function is as follows. One of the primary rRNA binding proteins, it binds directly near the 3'-end of the 23S rRNA, where it nucleates assembly of the 50S subunit. The chain is Large ribosomal subunit protein uL3 from Pelobacter propionicus (strain DSM 2379 / NBRC 103807 / OttBd1).